Consider the following 863-residue polypeptide: Paramyosin (863 aa).

The nonhelical region stretch occupies residues 1 to 18 (MSESHVKISRTIIRGTSP). Residues 19–836 (STVRLESRVR…ERTITIKRTI (818 aa)) adopt a coiled-coil conformation. Residues 837–863 (GGPGSRAVSVVREINSVSRGNRATSIM) form a nonhelical region region.

Belongs to the paramyosin family. Homodimer.

The protein localises to the cytoplasm. The protein resides in the myofibril. Its function is as follows. Paramyosin is a major structural component of many thick filaments isolated from invertebrate muscles. This is Paramyosin (PMY) from Taenia saginata (Beef tapeworm).